The primary structure comprises 206 residues: MTPMQEQLVALGAVFEAAVLADKIARTGQVSEASMSCMLGSLLVRDPQTTLDVYGGDDLNLRDGYRALISSLERNPSALQREPLRYSLAMIGLERQLDKRSDMLQVMGSRLDQIQQQVEHFGLVHDNVIAACGGLYQDTISTFRQRIQVHGDMRFLQQPNNAAKIRALLLAGIRSARLWRQLGGHRWQLVFSRGKLLKALYDMTRN.

This sequence belongs to the HflD family.

Its subcellular location is the cytoplasm. It localises to the cell inner membrane. In Ectopseudomonas mendocina (strain ymp) (Pseudomonas mendocina), this protein is High frequency lysogenization protein HflD homolog.